The primary structure comprises 381 residues: Homoserine O-succinyltransferase (381 aa).

The AB hydrolase-1 domain occupies 45-360 (NAVLVCHALN…PHGHDAFLLD (316 aa)). The active-site Nucleophile is the Ser-151. Arg-221 is a binding site for substrate. Catalysis depends on residues Asp-321 and His-354. Asp-355 provides a ligand contact to substrate.

The protein belongs to the AB hydrolase superfamily. MetX family. Homodimer.

The protein resides in the cytoplasm. The catalysed reaction is L-homoserine + succinyl-CoA = O-succinyl-L-homoserine + CoA. It functions in the pathway amino-acid biosynthesis; L-methionine biosynthesis via de novo pathway; O-succinyl-L-homoserine from L-homoserine: step 1/1. Transfers a succinyl group from succinyl-CoA to L-homoserine, forming succinyl-L-homoserine. The chain is Homoserine O-succinyltransferase from Burkholderia vietnamiensis (strain G4 / LMG 22486) (Burkholderia cepacia (strain R1808)).